The following is a 161-amino-acid chain: MQDAITAVINAADVQGKYLDTASVEKLKSYFQTGELRVRAAATIAANSSAIIKEAVAKSLLYSDITRPGGNMYTTRRYAACIRDLDYYVRYATYAMLAGDTSILDERVLNGLKETYNSLGVPVGATIQAIQAAKEVTAGLVGPDAGREMGIYYDYISSGLG.

The residue at position 71 (N71) is an N4-methylasparagine. C81 serves as a coordination point for (2R,3E)-phycocyanobilin.

The protein belongs to the phycobiliprotein family. Heterodimer of an alpha and a beta chain. In terms of processing, contains one covalently linked phycocyanobilin chromophore.

The protein localises to the plastid. Its subcellular location is the cyanelle thylakoid membrane. In terms of biological role, light-harvesting photosynthetic bile pigment-protein from the phycobiliprotein complex. Allophycocyanin has a maximum absorption at approximately 650 nanometers. The polypeptide is Allophycocyanin beta chain (apcB) (Cyanophora paradoxa).